We begin with the raw amino-acid sequence, 161 residues long: Phosphopantetheine adenylyltransferase (161 aa).

Serine 9 lines the substrate pocket. Residues 9–10 (SF) and histidine 17 each bind ATP. Substrate is bound by residues lysine 41, leucine 73, and lysine 87. Residues 88-90 (GLR), glutamate 98, and 122-128 (YSFVSSS) each bind ATP.

It belongs to the bacterial CoaD family. In terms of assembly, homohexamer. Mg(2+) serves as cofactor.

It is found in the cytoplasm. The catalysed reaction is (R)-4'-phosphopantetheine + ATP + H(+) = 3'-dephospho-CoA + diphosphate. Its pathway is cofactor biosynthesis; coenzyme A biosynthesis; CoA from (R)-pantothenate: step 4/5. Functionally, reversibly transfers an adenylyl group from ATP to 4'-phosphopantetheine, yielding dephospho-CoA (dPCoA) and pyrophosphate. This is Phosphopantetheine adenylyltransferase from Mycobacteroides abscessus (strain ATCC 19977 / DSM 44196 / CCUG 20993 / CIP 104536 / JCM 13569 / NCTC 13031 / TMC 1543 / L948) (Mycobacterium abscessus).